The chain runs to 607 residues: MLSYQDKAGAFYKDNARANSTKLSLVTEEHGGRRPPYLLFVLLVLLVGILALLAITGVRFHQVSTSNMEFSRLLKEDMEKSEAVHHQVIDVLTPLFKIIGDEIGSRLPQKLNEIKQFILQKTNFFNPNREFDFRDLHWCINPPSKVKVNFTNYCESIGIRKAIASAANPILLSALPGGRSDIFPPHRCSGATTSVGKVFPLSVSLSMSLISRTSEIINMLTAISDGVYGKTYLLAPDDIEREFDTQEIRVFEIGFIKRWLNDMPSLQTTNYMVLPENSKAKVCTIAVGELTLASLCVEESTVLLYHDSSGSQDGILVVTLGIFGTTPMDHIEEVIPVAHPSMEKIHITNHRGFIKDSIATWMVPALASEKQEEQKGCLESACQRKPYPMCNQTSWEPFGGRQLPSYGRLTLPLDASVDLQLNISFTYGPVILNGDGMDYYESPLLNSGWLTIPPKNGTILGLINKAGRGDQFTVIPHVLTFAPMESSGNCYLPIQTSQIIDRDVLIESNLVVLPTQSFRYVIATYDISRSDHAIVYYVYDPIRTISYTHPFRLTTKGRPDFLRIECFVWDDNLWCHQFYRFEANIANSTTSVENLVRIRFSCNRSNP.

The Intravirion portion of the chain corresponds to 1–37 (MLSYQDKAGAFYKDNARANSTKLSLVTEEHGGRRPPY). The helical transmembrane segment at 38 to 58 (LLFVLLVLLVGILALLAITGV) threads the bilayer. Over 59 to 607 (RFHQVSTSNM…IRFSCNRSNP (549 aa)) the chain is Virion surface. Residues Asn149, Asn391, Asn422, Asn456, Asn587, and Asn603 are each glycosylated (N-linked (GlcNAc...) asparagine; by host).

This sequence belongs to the paramyxoviruses hemagglutinin-neuraminidase family. Non-sialidase subfamily. As to quaternary structure, binds canine SLAMF1 at the cell surface.

It localises to the virion membrane. Its subcellular location is the host cell membrane. Its function is as follows. Attaches the virus to cell receptors and thereby initiating infection. Binding of H protein to the receptor induces a conformational change that allows the F protein to trigger virion/cell membranes fusion. The cellular receptor might be SLAM, and may explain the lymphotropism of the virus. This chain is Hemagglutinin glycoprotein (H), found in Ailuropoda melanoleuca (Giant panda).